Here is a 174-residue protein sequence, read N- to C-terminus: Beta-lactoglobulin (174 aa).

The first 18 residues, 1-18, serve as a signal peptide directing secretion; the sequence is MKFLLLTVGLTSICAIQA. 2 cysteine pairs are disulfide-bonded: C79-C172 and C122-C134.

This sequence belongs to the calycin superfamily. Lipocalin family. Monomer.

Its subcellular location is the secreted. Lactoglobulin is the primary component of whey, it binds retinol and is probably involved in the transport of that molecule. The chain is Beta-lactoglobulin (LGB) from Trichosurus vulpecula (Brush-tailed possum).